The following is a 455-amino-acid chain: EVQLVETGGGLIQPGGSLRLSCAASGFTVSNHSMSWVRQAPGKALEWVSAIYRGGTTYYADSVKGRFTISRDDSRNTVYLQMNSLRAEDTAVYYCARDLAAARLFGKGTTVTVSSASPTSPKVFPLSLDSTPQDGNVVVACLVQGFFPQEPLSVTWSESGQNVTARNFPPSQDASGDLYTTSSQLTLPATQCPDGKSVTCHVKHYTNSSQDVTVPCRVPPPPPCCHPRLSLHRPALEDLLLGSEANLTCTLTGLRDASGATFTWTPSSGKSAVEGPPERDLCGCYSVSSVLPGCAQPWNHGETFTCTAAHPELKTPLTANITKSGNTFRPEVHLLPPPSEELALNELVTLTCLARGFSPKDVLVRWLQGSQELPREKYLTWASRQEPSQGTTTYAVTSILRVAAEDWKKGETFSCMVGHEALPLAFTQKTIDRLAGKPTHINVSVVMAEADGTCY.

Ig-like domains follow at residues glutamate 1–cysteine 95, proline 121–threonine 213, proline 227–threonine 322, and proline 330–aspartate 432. Positions glutamate 1–serine 115 are variable (V) domain, involved in antigen recognition. Disulfide bonds link cysteine 22/cysteine 95 and cysteine 141/cysteine 200. The tract at residues alanine 116–tyrosine 455 is constant (C) domain. N-linked (GlcNAc...) asparagine glycans are attached at residues asparagine 162, asparagine 207, and asparagine 246. Cystine bridges form between cysteine 225-cysteine 282 and cysteine 249-cysteine 306. N-linked (GlcNAc...) asparagine glycosylation occurs at asparagine 320. Cysteine 352 and cysteine 415 are disulfide-bonded. Asparagine 442 carries N-linked (GlcNAc...) asparagine glycosylation.

As to quaternary structure, immunoglobulins are composed of two identical heavy chains and two identical light chains; disulfide-linked. Monomeric or polymeric.

The protein localises to the secreted. It is found in the cell membrane. In terms of biological role, immunoglobulins, also known as antibodies, are membrane-bound or secreted glycoproteins produced by B lymphocytes. In the recognition phase of humoral immunity, the membrane-bound immunoglobulins serve as receptors which, upon binding of a specific antigen, trigger the clonal expansion and differentiation of B lymphocytes into immunoglobulins-secreting plasma cells. Secreted immunoglobulins mediate the effector phase of humoral immunity, which results in the elimination of bound antigens. The antigen binding site is formed by the variable domain of one heavy chain, together with that of its associated light chain. Thus, each immunoglobulin has two antigen binding sites with remarkable affinity for a particular antigen. The variable domains are assembled by a process called V-(D)-J rearrangement and can then be subjected to somatic hypermutations which, after exposure to antigen and selection, allow affinity maturation for a particular antigen. Ig alpha is the major immunoglobulin class in body secretions. In Homo sapiens (Human), this protein is Immunoglobulin alpha-2 heavy chain.